The primary structure comprises 581 residues: Chaperonin GroEL 1 (581 aa).

ATP is bound by residues 29–32, 86–90, Gly-413, and Asp-492; these read TIGP and DGTTT. The disordered stretch occupies residues 522–541; that stretch reads PEPEAAGPGGPGADPMGGMG. A compositionally biased stretch (gly residues) spans 528–541; the sequence is GPGGPGADPMGGMG.

Belongs to the chaperonin (HSP60) family. In terms of assembly, forms a cylinder of 14 subunits composed of two heptameric rings stacked back-to-back. Interacts with the co-chaperonin GroES.

The protein resides in the cytoplasm. The catalysed reaction is ATP + H2O + a folded polypeptide = ADP + phosphate + an unfolded polypeptide.. Together with its co-chaperonin GroES, plays an essential role in assisting protein folding. The GroEL-GroES system forms a nano-cage that allows encapsulation of the non-native substrate proteins and provides a physical environment optimized to promote and accelerate protein folding. This chain is Chaperonin GroEL 1, found in Prochlorococcus marinus (strain MIT 9301).